Here is a 186-residue protein sequence, read N- to C-terminus: Ribosome-recycling factor (186 aa).

The protein belongs to the RRF family.

Its subcellular location is the cytoplasm. Its function is as follows. Responsible for the release of ribosomes from messenger RNA at the termination of protein biosynthesis. May increase the efficiency of translation by recycling ribosomes from one round of translation to another. In Rickettsia typhi (strain ATCC VR-144 / Wilmington), this protein is Ribosome-recycling factor.